Reading from the N-terminus, the 674-residue chain is DNA-directed RNA polymerase subunit beta' (674 aa).

Zn(2+) contacts are provided by Cys69, Cys71, Cys87, and Cys90. The Mg(2+) site is built by Asp494, Asp496, and Asp498.

This sequence belongs to the RNA polymerase beta' chain family. RpoC1 subfamily. In plastids the minimal PEP RNA polymerase catalytic core is composed of four subunits: alpha, beta, beta', and beta''. When a (nuclear-encoded) sigma factor is associated with the core the holoenzyme is formed, which can initiate transcription. Requires Mg(2+) as cofactor. Zn(2+) is required as a cofactor.

It localises to the plastid. Its subcellular location is the chloroplast. It catalyses the reaction RNA(n) + a ribonucleoside 5'-triphosphate = RNA(n+1) + diphosphate. Functionally, DNA-dependent RNA polymerase catalyzes the transcription of DNA into RNA using the four ribonucleoside triphosphates as substrates. The sequence is that of DNA-directed RNA polymerase subunit beta' from Psilotum nudum (Whisk fern).